The sequence spans 206 residues: Probable GTP-binding protein EngB (206 aa).

The region spanning D23–E195 is the EngB-type G domain. Residues G31 to S38, G58 to L62, D76 to G79, T143 to D146, and F174 to A176 contribute to the GTP site. Mg(2+)-binding residues include S38 and T60.

The protein belongs to the TRAFAC class TrmE-Era-EngA-EngB-Septin-like GTPase superfamily. EngB GTPase family. Requires Mg(2+) as cofactor.

Functionally, necessary for normal cell division and for the maintenance of normal septation. This is Probable GTP-binding protein EngB from Geobacter sulfurreducens (strain ATCC 51573 / DSM 12127 / PCA).